We begin with the raw amino-acid sequence, 336 residues long: MYYPLIRKALFQLDPERAHELTFQQLRRVTGTPLEFLIRQSVPTKPVSCMGLSFKNPLGLAAGLDKDGECIDAFGAMGFGFVEVGTVTPRPQSGNDKPRLFRIVEAEGLINRMGFNNQGVDNLVENVKKSHFGGILGINIGKNKDTPVEQGKDDYLICMDKVYPYAGYIAINISSPNTPGLRSLQYGEALDDLLAAIKNKQQELHERHHKYVPVAVKIAPDLSEEELIQIADSLVRHNIDGVIATNTTLDRKLIQGLNYCEQMGGLSGRPLQASSTEVIRRLSLELQGRLPIIGVGGIDSLMAAREKMAAGASLVQIYSGFIFKGPRLIKDIVNYI.

Residues 62-66 and Thr86 each bind FMN; that span reads AGLDK. Lys66 is a substrate binding site. A substrate-binding site is contributed by 111-115; the sequence is NRMGF. 2 residues coordinate FMN: Asn139 and Asn172. Asn172 serves as a coordination point for substrate. Residue Ser175 is the Nucleophile of the active site. A substrate-binding site is contributed by Asn177. Residues Lys217 and Thr245 each contribute to the FMN site. 246–247 contributes to the substrate binding site; that stretch reads NT. Residues Gly268, Gly297, and 318–319 contribute to the FMN site; that span reads YS.

The protein belongs to the dihydroorotate dehydrogenase family. Type 2 subfamily. Monomer. FMN serves as cofactor.

It is found in the cell membrane. It carries out the reaction (S)-dihydroorotate + a quinone = orotate + a quinol. The protein operates within pyrimidine metabolism; UMP biosynthesis via de novo pathway; orotate from (S)-dihydroorotate (quinone route): step 1/1. Functionally, catalyzes the conversion of dihydroorotate to orotate with quinone as electron acceptor. The sequence is that of Dihydroorotate dehydrogenase (quinone) from Serratia proteamaculans (strain 568).